Reading from the N-terminus, the 314-residue chain is MKLLIIKIDTSYEVEDALGVFATDNLKALGIESRKRSDFEQAGWLHDSTVVEMDDIKDLPKDTYFYAYFDEEADKDELVEKFQAKLEELKSYGLNTGEGKITTSYIEDQDWNTAWQKYYHVIDFSRHLAIVPEWEDYQPAFSDQQLIKLDPGLAFGTGNHKTTQLAMMGIERAMVKPMSVVDVGTGSGILAIAASKLGATNVLATDISDESMTAAKQNSALNNLTNIKVQKTSLLAGVEGKFDIIVANILAEILLDLIPQMDAHLNKDGQVIFSGIDYLQLPKIKKSLDENNFKIDLTMKQGRWIGLAITRKEK.

Thr163, Gly184, Asp206, and Asn248 together coordinate S-adenosyl-L-methionine.

The protein belongs to the methyltransferase superfamily. PrmA family.

It localises to the cytoplasm. The enzyme catalyses L-lysyl-[protein] + 3 S-adenosyl-L-methionine = N(6),N(6),N(6)-trimethyl-L-lysyl-[protein] + 3 S-adenosyl-L-homocysteine + 3 H(+). In terms of biological role, methylates ribosomal protein L11. This chain is Ribosomal protein L11 methyltransferase, found in Lactobacillus acidophilus (strain ATCC 700396 / NCK56 / N2 / NCFM).